Consider the following 579-residue polypeptide: Zinc metalloproteinase nas-11 (579 aa).

Residues 1–17 (MTPSLVFLIVVIVVVEG) form the signal peptide. Residues 18 to 328 (QGWRPWDRFN…AAPGSSRLKK (311 aa)) constitute a propeptide that is removed on maturation. The interval 35–58 (WGGNNWGTRQRNQEPHDIPPPVPP) is disordered. A glycan (N-linked (GlcNAc...) asparagine) is linked at Asn-256. Acidic residues predominate over residues 293–312 (GDDEIPLPDADTDDEDDDDS). Positions 293 to 323 (GDDEIPLPDADTDDEDDDDSTNSASGAAPGS) are disordered. Residues 329 to 536 (SALYFEGNLI…IELLKKMYCQ (208 aa)) enclose the Peptidase M12A domain. Disulfide bonds link Cys-375–Cys-535, Cys-401–Cys-421, Cys-539–Cys-575, Cys-546–Cys-568, and Cys-555–Cys-572. A Zn(2+)-binding site is contributed by His-430. Glu-431 is a catalytic residue. Residues His-434 and His-440 each coordinate Zn(2+). The N-linked (GlcNAc...) asparagine glycan is linked to Asn-454. A ShKT domain is found at 539 to 575 (CDDKNVYCGAWALKDLCKNPGHDQYMAANCKKSCGLC).

Zn(2+) is required as a cofactor. In terms of tissue distribution, expressed in the anterior part of the intestine, CEP neurons and to a lesser extent in hypodermis.

The protein localises to the secreted. In terms of biological role, metalloprotease. This is Zinc metalloproteinase nas-11 (nas-11) from Caenorhabditis elegans.